Here is a 160-residue protein sequence, read N- to C-terminus: MLDIVLYEPEIPQNTGNIIRLCANTGFRLHLIEPLGFTWDDKRLRRSGLDYHEFAEIKRHKTFEAFLESEKPKRLFALTTKGCPAHSQVKFKLGDYLMFGPETRGIPMSILNEMPMEQKIRIPMTANSRSMNLSNSVAVTVYEAWRQLGYKGAVNLPEVK.

Positions 78, 100, 122, and 130 each coordinate S-adenosyl-L-methionine.

The protein belongs to the class IV-like SAM-binding methyltransferase superfamily. RNA methyltransferase TrmH family. TrmL subfamily. Homodimer.

The protein localises to the cytoplasm. It catalyses the reaction cytidine(34) in tRNA + S-adenosyl-L-methionine = 2'-O-methylcytidine(34) in tRNA + S-adenosyl-L-homocysteine + H(+). The catalysed reaction is 5-carboxymethylaminomethyluridine(34) in tRNA(Leu) + S-adenosyl-L-methionine = 5-carboxymethylaminomethyl-2'-O-methyluridine(34) in tRNA(Leu) + S-adenosyl-L-homocysteine + H(+). Functionally, methylates the ribose at the nucleotide 34 wobble position in the two leucyl isoacceptors tRNA(Leu)(CmAA) and tRNA(Leu)(cmnm5UmAA). Catalyzes the methyl transfer from S-adenosyl-L-methionine to the 2'-OH of the wobble nucleotide. This is tRNA (cytidine(34)-2'-O)-methyltransferase from Haemophilus influenzae (strain ATCC 51907 / DSM 11121 / KW20 / Rd).